A 201-amino-acid chain; its full sequence is Holliday junction branch migration complex subunit RuvA (201 aa).

The segment at 1–63 (MIEYVRGELA…EDAYVLYGFA (63 aa)) is domain I. Positions 64 to 142 (DKQEREIFLL…TMGATVAGGS (79 aa)) are domain II. A flexible linker region spans residues 143-151 (ASAGMLLQS). The domain III stretch occupies residues 152 to 201 (ASVEVQEEAVAALTMLGFAAAPSQKVVLAILKEEPDAPVEKVIKLALKRL).

The protein belongs to the RuvA family. As to quaternary structure, homotetramer. Forms an RuvA(8)-RuvB(12)-Holliday junction (HJ) complex. HJ DNA is sandwiched between 2 RuvA tetramers; dsDNA enters through RuvA and exits via RuvB. An RuvB hexamer assembles on each DNA strand where it exits the tetramer. Each RuvB hexamer is contacted by two RuvA subunits (via domain III) on 2 adjacent RuvB subunits; this complex drives branch migration. In the full resolvosome a probable DNA-RuvA(4)-RuvB(12)-RuvC(2) complex forms which resolves the HJ.

The protein localises to the cytoplasm. Its function is as follows. The RuvA-RuvB-RuvC complex processes Holliday junction (HJ) DNA during genetic recombination and DNA repair, while the RuvA-RuvB complex plays an important role in the rescue of blocked DNA replication forks via replication fork reversal (RFR). RuvA specifically binds to HJ cruciform DNA, conferring on it an open structure. The RuvB hexamer acts as an ATP-dependent pump, pulling dsDNA into and through the RuvAB complex. HJ branch migration allows RuvC to scan DNA until it finds its consensus sequence, where it cleaves and resolves the cruciform DNA. The chain is Holliday junction branch migration complex subunit RuvA from Bacteroides thetaiotaomicron (strain ATCC 29148 / DSM 2079 / JCM 5827 / CCUG 10774 / NCTC 10582 / VPI-5482 / E50).